Here is a 668-residue protein sequence, read N- to C-terminus: Threonine--tRNA ligase (668 aa).

Residues 1–61 (MSDLKIALTH…ADGDQVEPVA (61 aa)) form the TGS domain. The tract at residues 265-564 (DHRKLGRDLD…LVEHYAGAFP (300 aa)) is catalytic. Residues C358, H409, and H541 each contribute to the Zn(2+) site.

It belongs to the class-II aminoacyl-tRNA synthetase family. Homodimer. Zn(2+) is required as a cofactor.

Its subcellular location is the cytoplasm. It catalyses the reaction tRNA(Thr) + L-threonine + ATP = L-threonyl-tRNA(Thr) + AMP + diphosphate + H(+). In terms of biological role, catalyzes the attachment of threonine to tRNA(Thr) in a two-step reaction: L-threonine is first activated by ATP to form Thr-AMP and then transferred to the acceptor end of tRNA(Thr). Also edits incorrectly charged L-seryl-tRNA(Thr). This Nocardioides sp. (strain ATCC BAA-499 / JS614) protein is Threonine--tRNA ligase.